We begin with the raw amino-acid sequence, 292 residues long: Claudin-23 (292 aa).

Over 1 to 3 (MRT) the chain is Cytoplasmic. Residues 4 to 24 (PVVMTLGMVLAPCGLLLNLTG) traverse the membrane as a helical segment. Residues 25–81 (TLAPGWRLVKGFLNQPVDVELYQGLWDMCREQSSRERECGQTDQWGYFEAQPVLVAR) are Extracellular-facing. Residues 82-102 (ALMVTSLAATVLGLLLASLGV) traverse the membrane as a helical segment. Over 103 to 110 (RCWQDEPN) the chain is Cytoplasmic. A helical membrane pass occupies residues 111 to 131 (FVLAGLSGVVLFVAGLLGLIP). At 132-160 (VSWYNHFLGDRDVLPAPASPVTVQVSYSL) the chain is on the extracellular side. Residues 161 to 181 (VLGYLGSCLLLLGGFSLALSF) traverse the membrane as a helical segment. The Cytoplasmic portion of the chain corresponds to 182–292 (APWCDERCRR…DSSLPCDSDL (111 aa)). Residues 222-292 (KYYSDGQHRP…DSSLPCDSDL (71 aa)) are disordered. Positions 273-282 (DAPSCSTHPC) are enriched in polar residues.

The protein belongs to the claudin family. In terms of tissue distribution, expressed in germinal center B-cells, placenta, stomach as well as in colon tumor.

It is found in the cell junction. The protein resides in the tight junction. Its subcellular location is the cell membrane. In terms of biological role, plays a major role in tight junction-specific obliteration of the intercellular space, through calcium-independent cell-adhesion activity. The protein is Claudin-23 (CLDN23) of Homo sapiens (Human).